Reading from the N-terminus, the 151-residue chain is Transcriptional repressor NrdR (151 aa).

The segment at 3-34 (CPYCGYIEDRVIDSRPTDEGSAIRRRRECSKC) is a zinc-finger region. Positions 49-139 (IMVIKKDKSR…VYRQFKDINT (91 aa)) constitute an ATP-cone domain.

Belongs to the NrdR family. Requires Zn(2+) as cofactor.

In terms of biological role, negatively regulates transcription of bacterial ribonucleotide reductase nrd genes and operons by binding to NrdR-boxes. This Acetivibrio thermocellus (strain ATCC 27405 / DSM 1237 / JCM 9322 / NBRC 103400 / NCIMB 10682 / NRRL B-4536 / VPI 7372) (Clostridium thermocellum) protein is Transcriptional repressor NrdR.